The chain runs to 268 residues: Undecaprenyl-diphosphatase (268 aa).

Transmembrane regions (helical) follow at residues 3-23, 46-66, 84-104, 107-127, 144-164, 185-205, 213-233, and 246-266; these read FFNL…EFIP, FEVL…SAKL, LGVL…HGFI, VLFE…FILL, YPLP…IPGV, AEFS…YDLF, FNDG…GVFV, and FALF…ALII.

It belongs to the UppP family.

The protein localises to the cell inner membrane. The enzyme catalyses di-trans,octa-cis-undecaprenyl diphosphate + H2O = di-trans,octa-cis-undecaprenyl phosphate + phosphate + H(+). Its function is as follows. Catalyzes the dephosphorylation of undecaprenyl diphosphate (UPP). Confers resistance to bacitracin. The chain is Undecaprenyl-diphosphatase from Brucella abortus (strain S19).